Here is an 843-residue protein sequence, read N- to C-terminus: Proto-oncogene vav (843 aa).

The Calponin-homology (CH) domain maps to 1-119 (MELWRQCTHW…YTLSALSWTP (119 aa)). Residues 194 to 373 (KRCCCLREIQ…RDLAQCVNEV (180 aa)) form the DH domain. Residues 402–504 (RPKIDGELKI…WMEQFEMAIS (103 aa)) enclose the PH domain. The segment at 515-564 (GHDFQMFSFEETTSCKACQMLLRGTFYQGYRCYRCRAPAHKECLGRVPPC) adopts a Phorbol-ester/DAG-type zinc-finger fold. The region spanning 590 to 658 (LGLPKMEVCQ…PCNRVRPYVH (69 aa)) is the SH3 1 domain. The 95-residue stretch at 669–763 (WYAGPMERAG…SLDTTLQFPY (95 aa)) folds into the SH2 domain. An SH3 2 domain is found at 780-840 (KYFGTAKARY…PSNYVEEDYS (61 aa)). A phosphotyrosine mark is found at tyrosine 824 and tyrosine 842.

As to quaternary structure, interacts with SHB. Interacts with APS, DOCK2, GRB2, GRB3, DOCK2, SLA, TEC and ZNF655/VIK. Interacts with SIAH2; without leading to its degradation. Associates with BLNK, PLCG1, GRB2 and NCK1 in a B-cell antigen receptor-dependent fashion. Interacts with CBLB; which inhibits tyrosine phosphorylation and down-regulates activity. May interact with CCPG1. Interacts with CLNK. Interacts with THEMIS2. Interacts with NEK3 and this interaction is prolactin-dependent. Interacts with ITK. Interacts with PTK2B/PYK2. Interacts with HCK. Interacts with PTK2B/PYK2. Interacts (via SH2 domain) with SYK. Interacts with ANKRD54. Interacts with CD6. Interacts with LCP2; this interaction plays a role in TCR-mediated cytokine production. In terms of processing, phosphorylated by FYN. Phosphorylated on tyrosine residues by HCK in response to IFNG and bacterial lipopolysaccharide (LPS).

Functionally, couples tyrosine kinase signals with the activation of the Rho/Rac GTPases, thus leading to cell differentiation and/or proliferation. The polypeptide is Proto-oncogene vav (Vav1) (Rattus norvegicus (Rat)).